We begin with the raw amino-acid sequence, 304 residues long: MKNIVFMGTPDYASVILEAILKNGGYNVVAVFTQPDRPVGRKAILTPPEVKKTVLQSGLDIPIFQPLNLKDSSTVNDIKALKPNFIVVAAYGQILPKDILDIAPCINLHASLLPKFRGASPIQEAILRGELLSGVTAMRMGVGLDDGDILGFSVIEIPNLKSSQLFCELAKMAAKLTIKILNEFESISPIAQFHALSSKCGKVHKEDGLIDIKLQTPKIIESKFRAYYPWPGLYLENGVKIWDMEISNLKGENGYVLSIDYDGFTIGVNGGSIKIKSLQESGKKMVNAKDYINGKRLGVGSKFC.

Residue 111-114 (SLLP) coordinates (6S)-5,6,7,8-tetrahydrofolate.

This sequence belongs to the Fmt family.

The enzyme catalyses L-methionyl-tRNA(fMet) + (6R)-10-formyltetrahydrofolate = N-formyl-L-methionyl-tRNA(fMet) + (6S)-5,6,7,8-tetrahydrofolate + H(+). Functionally, attaches a formyl group to the free amino group of methionyl-tRNA(fMet). The formyl group appears to play a dual role in the initiator identity of N-formylmethionyl-tRNA by promoting its recognition by IF2 and preventing the misappropriation of this tRNA by the elongation apparatus. This is Methionyl-tRNA formyltransferase from Campylobacter fetus subsp. fetus (strain 82-40).